A 1380-amino-acid chain; its full sequence is Inverted formin-2 (1380 aa).

In terms of domain architecture, GBD/FH3 spans 1–330; sequence MSLKEGAHTK…RAVLLADDCQ (330 aa). 2 disordered regions span residues 341–391 and 440–541; these read LVTS…SGIP and ISTS…PPPL. The segment covering 343 to 352 has biased composition (basic residues); the sequence is TSKKHPSKEK. Basic and acidic residues predominate over residues 367–385; that stretch reads QTDKPKDESCEEKTVKKDP. The 161-residue stretch at 432–592 folds into the FH1 domain; sequence VVSNAIDRIS…DYSLGYLPKA (161 aa). 2 stretches are compositionally biased toward pro residues: residues 446 to 470 and 478 to 541; these read LPPP…PPLP and TPPP…PPPL. The 389-residue stretch at 593-981 folds into the FH2 domain; the sequence is YFKVNKPTLK…AEKRKKQLAD (389 aa). 2 coiled-coil regions span residues 879–930 and 956–991; these read LKKL…KLAD and LKAK…KGEN. The WH2 domain maps to 1009 to 1024; it reads DALLADIKKGFQLRKT. 3 disordered regions span residues 1026 to 1049, 1188 to 1244, and 1260 to 1380; these read KTKT…DGTD, HKER…LSEA, and FQSS…CVVQ. 3 stretches are compositionally biased toward polar residues: residues 1206 to 1244, 1260 to 1284, and 1294 to 1303; these read GTES…LSEA, FQSS…QAQR, and TRDTTVTEGS. Positions 1306–1322 are enriched in basic and acidic residues; that stretch reads EEDKCNDEGYPEHKTMG. The span at 1328-1339 shows a compositional bias: low complexity; sequence SSSHSTTLQQSS. Residues 1345–1359 show a composition bias toward basic residues; sequence VKRGSSKHKKKRRSS.

Belongs to the formin homology family.

The protein is Inverted formin-2 (inf2) of Xenopus tropicalis (Western clawed frog).